The following is a 338-amino-acid chain: Peptidoglycan deacetylase-like protein FGM2 (338 aa).

The Zn(2+) site is built by Asp49, His124, and His128. The NodB homology domain maps to 65-257 (LSDYSAGIFA…VTNSHGFVSS (193 aa)).

The protein belongs to the polysaccharide deacetylase family.

Its function is as follows. Peptidoglycan deacetylase-like protein; part of the Fg3_54/C64 gene cluster that mediates the biosynthesis of the octapeptide fusaoctaxin A, a virulence factor that is required for cell-to-cell invasiveness of plant host. The 2 nonribosomal peptide synthetases NRPS9 and NRPS5 form an assembly line which likely utilizes GABA as a starter unit (loaded on the unique module M1 of NRPS9) and sequentially incorporates seven extender units composed of the residues L-Ala, L-allo-Ile, L-Ser, L-Val, L-Ser, L-Leu and L-Leu, respectively. During the process, each of the residues that are tethered on modules M3-M7 of NRPS5 containing an E domain can undergo an epimerization reaction to produce a D-configuration before the transpeptidation reaction occurs. The elongation of the peptidyl chain might be terminated by module M8-mediated L-Leu incorporation, followed by R domain-catalyzed 4 electron reduction to release the resulting octapeptide from the assembly line as an alcohol. Fusaoctaxin A is cleaved by the cluster specific ABC transporter FGM5 to the pentapeptide fusapentaxin A and the tripeptide fusatrixin A. The other enzymes from the cluster, FGM1, FGM2, FGM3 and FGM9 seem not to be involved in the biosynthesis of fusaoctaxin A and their functions have still to be determined. This chain is Peptidoglycan deacetylase-like protein FGM2, found in Gibberella zeae (strain ATCC MYA-4620 / CBS 123657 / FGSC 9075 / NRRL 31084 / PH-1) (Wheat head blight fungus).